We begin with the raw amino-acid sequence, 401 residues long: 8-amino-7-oxononanoate synthase (401 aa).

Arginine 24 lines the substrate pocket. Pyridoxal 5'-phosphate is bound at residue 111–112 (GF). Substrate is bound at residue histidine 137. Residues serine 183, histidine 211, and threonine 240 each coordinate pyridoxal 5'-phosphate. Position 243 is an N6-(pyridoxal phosphate)lysine (lysine 243). Threonine 357 lines the substrate pocket.

This sequence belongs to the class-II pyridoxal-phosphate-dependent aminotransferase family. BioF subfamily. Homodimer. The cofactor is pyridoxal 5'-phosphate.

The catalysed reaction is 6-carboxyhexanoyl-[ACP] + L-alanine + H(+) = (8S)-8-amino-7-oxononanoate + holo-[ACP] + CO2. It functions in the pathway cofactor biosynthesis; biotin biosynthesis. Its function is as follows. Catalyzes the decarboxylative condensation of pimeloyl-[acyl-carrier protein] and L-alanine to produce 8-amino-7-oxononanoate (AON), [acyl-carrier protein], and carbon dioxide. This chain is 8-amino-7-oxononanoate synthase, found in Xylella fastidiosa (strain M12).